Here is a 153-residue protein sequence, read N- to C-terminus: Aspartate carbamoyltransferase regulatory chain (153 aa).

Zn(2+) contacts are provided by cysteine 109, cysteine 114, cysteine 138, and cysteine 141.

Belongs to the PyrI family. In terms of assembly, contains catalytic and regulatory chains. Zn(2+) serves as cofactor.

In terms of biological role, involved in allosteric regulation of aspartate carbamoyltransferase. This chain is Aspartate carbamoyltransferase regulatory chain, found in Enterobacter sp. (strain 638).